A 256-amino-acid polypeptide reads, in one-letter code: Nuclear shuttle protein (256 aa).

Residues 21-42 carry the Bipartite nuclear localization signal motif; that stretch reads NSLIRQQSLFKRNVSKRRPFQT. A Nuclear localization signal motif is present at residues 81-96; sequence DIAKSLPNRTRSYIKL. The segment at 150–187 is interaction with Arabidopsis thaliana NSI protein; that stretch reads ELFGARIHSHGNLAIVPSLKDRFYIRHVLKRVISVEKD.

Belongs to the begomovirus nuclear shuttle protein family. In terms of assembly, binds to single-stranded and double-stranded viral DNA. Interacts with the host nuclear shuttle interacting (NSI) protein. This interaction may allow NSP to recruit NSI monomers to the viral genome and thus regulate nuclear export of viral genome by NSP.

The protein localises to the host nucleus. Its subcellular location is the host cytoplasm. It is found in the host cell membrane. In terms of biological role, binds to the genomic viral ssDNA, shuttles it into and out of the cell nucleus. Begomoviruses use 2 proteins to transport their DNA from cell to cell. The nuclear shuttle protein (NSP) shuttles it between nucleus and cytoplasm and the movement protein (MP) probably transports the DNA-NSP complex to the cell periphery and facilitates movement across the cell wall. This chain is Nuclear shuttle protein, found in Potato yellow mosaic virus (isolate Venezuela) (PYMV).